The primary structure comprises 561 residues: Microtubule-associated protein VP6 (561 aa).

Interacts with VP2.

Its subcellular location is the virion. It localises to the host cytoplasm. It is found in the host cytoskeleton. Minor inner capsid component. Displays NTPase and RNA 5'-triphosphatase (RTPase) activities. May function as a cofactor of polymerase VP2. Associates with microtubules and plays a role in the formation, structural organization and morphology of viral inclusions, where the assembly of cores and the replication of viral RNA occur. This Lymantria dispar cypovirus 1 (isolate Rao) (LdCPV-1) protein is Microtubule-associated protein VP6 (S6).